The following is a 264-amino-acid chain: Formamidopyrimidine-DNA glycosylase (264 aa).

Proline 2 serves as the catalytic Schiff-base intermediate with DNA. Glutamate 3 acts as the Proton donor in catalysis. Lysine 58 serves as the catalytic Proton donor; for beta-elimination activity. The DNA site is built by histidine 89, arginine 107, and arginine 144. An FPG-type zinc finger spans residues 229 to 263 (RVYQRTGEPCLNCKTPIRRVIVTQRSSHFCPHCQK). Arginine 253 functions as the Proton donor; for delta-elimination activity in the catalytic mechanism.

This sequence belongs to the FPG family. As to quaternary structure, monomer. It depends on Zn(2+) as a cofactor.

It catalyses the reaction Hydrolysis of DNA containing ring-opened 7-methylguanine residues, releasing 2,6-diamino-4-hydroxy-5-(N-methyl)formamidopyrimidine.. The enzyme catalyses 2'-deoxyribonucleotide-(2'-deoxyribose 5'-phosphate)-2'-deoxyribonucleotide-DNA = a 3'-end 2'-deoxyribonucleotide-(2,3-dehydro-2,3-deoxyribose 5'-phosphate)-DNA + a 5'-end 5'-phospho-2'-deoxyribonucleoside-DNA + H(+). Its function is as follows. Involved in base excision repair of DNA damaged by oxidation or by mutagenic agents. Acts as a DNA glycosylase that recognizes and removes damaged bases. Has a preference for oxidized purines, such as 7,8-dihydro-8-oxoguanine (8-oxoG). Has AP (apurinic/apyrimidinic) lyase activity and introduces nicks in the DNA strand. Cleaves the DNA backbone by beta-delta elimination to generate a single-strand break at the site of the removed base with both 3'- and 5'-phosphates. The sequence is that of Formamidopyrimidine-DNA glycosylase from Solibacter usitatus (strain Ellin6076).